A 282-amino-acid polypeptide reads, in one-letter code: Pantothenate synthetase (282 aa).

30 to 37 (MGYLHEGH) contacts ATP. The active-site Proton donor is H37. Q61 contacts (R)-pantoate. Q61 serves as a coordination point for beta-alanine. An ATP-binding site is contributed by 147-150 (GQKD). Position 153 (Q153) interacts with (R)-pantoate. ATP contacts are provided by residues V176 and 184 to 187 (MSSR).

Belongs to the pantothenate synthetase family. As to quaternary structure, homodimer.

Its subcellular location is the cytoplasm. It carries out the reaction (R)-pantoate + beta-alanine + ATP = (R)-pantothenate + AMP + diphosphate + H(+). It functions in the pathway cofactor biosynthesis; (R)-pantothenate biosynthesis; (R)-pantothenate from (R)-pantoate and beta-alanine: step 1/1. Catalyzes the condensation of pantoate with beta-alanine in an ATP-dependent reaction via a pantoyl-adenylate intermediate. The protein is Pantothenate synthetase of Pelotomaculum thermopropionicum (strain DSM 13744 / JCM 10971 / SI).